A 352-amino-acid chain; its full sequence is Chorismate synthase (352 aa).

Arginine 48 is an NADP(+) binding site. FMN is bound by residues 125 to 127 (RSS), 237 to 238 (NA), glycine 278, 293 to 297 (KPTSS), and arginine 319.

Belongs to the chorismate synthase family. As to quaternary structure, homotetramer. FMNH2 is required as a cofactor.

The enzyme catalyses 5-O-(1-carboxyvinyl)-3-phosphoshikimate = chorismate + phosphate. The protein operates within metabolic intermediate biosynthesis; chorismate biosynthesis; chorismate from D-erythrose 4-phosphate and phosphoenolpyruvate: step 7/7. In terms of biological role, catalyzes the anti-1,4-elimination of the C-3 phosphate and the C-6 proR hydrogen from 5-enolpyruvylshikimate-3-phosphate (EPSP) to yield chorismate, which is the branch point compound that serves as the starting substrate for the three terminal pathways of aromatic amino acid biosynthesis. This reaction introduces a second double bond into the aromatic ring system. The chain is Chorismate synthase from Francisella tularensis subsp. tularensis (strain FSC 198).